The sequence spans 317 residues: Beta-ketoacyl-[acyl-carrier-protein] synthase III (317 aa).

Residues C112 and H244 contribute to the active site. The interval 245–249 (QANLR) is ACP-binding. N274 is a catalytic residue.

This sequence belongs to the thiolase-like superfamily. FabH family. Homodimer.

Its subcellular location is the cytoplasm. It catalyses the reaction malonyl-[ACP] + acetyl-CoA + H(+) = 3-oxobutanoyl-[ACP] + CO2 + CoA. It functions in the pathway lipid metabolism; fatty acid biosynthesis. Catalyzes the condensation reaction of fatty acid synthesis by the addition to an acyl acceptor of two carbons from malonyl-ACP. Catalyzes the first condensation reaction which initiates fatty acid synthesis and may therefore play a role in governing the total rate of fatty acid production. Possesses both acetoacetyl-ACP synthase and acetyl transacylase activities. Its substrate specificity determines the biosynthesis of branched-chain and/or straight-chain of fatty acids. This chain is Beta-ketoacyl-[acyl-carrier-protein] synthase III, found in Aliivibrio fischeri (strain ATCC 700601 / ES114) (Vibrio fischeri).